We begin with the raw amino-acid sequence, 137 residues long: Nucleoside diphosphate kinase (137 aa).

K9, F57, R85, T91, R102, and N112 together coordinate ATP. The active-site Pros-phosphohistidine intermediate is H115.

The protein belongs to the NDK family. In terms of assembly, homotetramer. Requires Mg(2+) as cofactor.

The protein resides in the cytoplasm. It catalyses the reaction a 2'-deoxyribonucleoside 5'-diphosphate + ATP = a 2'-deoxyribonucleoside 5'-triphosphate + ADP. It carries out the reaction a ribonucleoside 5'-diphosphate + ATP = a ribonucleoside 5'-triphosphate + ADP. Functionally, major role in the synthesis of nucleoside triphosphates other than ATP. The ATP gamma phosphate is transferred to the NDP beta phosphate via a ping-pong mechanism, using a phosphorylated active-site intermediate. This Aliarcobacter butzleri (strain RM4018) (Arcobacter butzleri) protein is Nucleoside diphosphate kinase.